Reading from the N-terminus, the 873-residue chain is Actin-related protein 8 (873 aa).

A disordered region spans residues 108 to 129 (DEQVKPTSSTSSTSTTEEVEIK). The span at 114 to 123 (TSSTSSTSTT) shows a compositional bias: low complexity. 368–371 (DLGH) is an ATP binding site. The segment covering 596 to 650 (NNNNNNNNSSSSSNNNNNNNNSGSNSNINSYNNNNNNNNNNNNNNNNNNNNSFNN) has biased composition (low complexity). The interval 596–701 (NNNNNNNNSS…TSSPTKKLKI (106 aa)) is disordered. A compositionally biased stretch (polar residues) spans 651 to 668 (VTIVTSTLNSNSTVPSTL). Residues 669–696 (NSNSTVPSISNSNSTVPSTSTSTTSSPT) are compositionally biased toward low complexity. Residues 762–804 (FKQLEQQYQAQQLQFQQQLQQQQQQQQQLQQQLQNSTNSATTT) adopt a coiled-coil conformation.

Belongs to the actin family. ARP8 subfamily. As to quaternary structure, component of the chromatin remodeling INO80 complex. Exists as monomers and dimers, but the dimer is most probably the biologically relevant form required for stable interactions with histones that exploits the twofold symmetry of the nucleosome core.

The protein resides in the nucleus. It is found in the cytoplasm. It localises to the cytoskeleton. In terms of biological role, plays an important role in the functional organization of mitotic chromosomes. Exhibits low basal ATPase activity, and unable to polymerize. Functionally, proposed core component of the chromatin remodeling INO80 complex which is involved in transcriptional regulation, DNA replication and probably DNA repair. Strongly prefer nucleosomes and H3-H4 tetramers over H2A-H2B dimers, suggesting it may act as a nucleosome recognition module within the complex. The sequence is that of Actin-related protein 8 from Dictyostelium discoideum (Social amoeba).